A 780-amino-acid chain; its full sequence is Pendrin (780 aa).

Topologically, residues 1 to 87 are cytoplasmic; the sequence is MAARGGRSEP…YRVKEWLLSD (87 aa). A helical transmembrane segment spans residues 88–108; that stretch reads IISGVSTGLVGTLQGMAYALL. Residue A109 is a topological domain, extracellular. The chain crosses the membrane as a helical span at residues 110–130; it reads AVPVQFGLYSAFFPILTYFVF. The Cytoplasmic segment spans residues 131–135; that stretch reads GTSRH. Residues 136 to 156 form a helical membrane-spanning segment; the sequence is ISVGPFPVVSLMVGSVVLSMA. At 157–191 the chain is on the extracellular side; sequence PDDHFLVPSGNGSALNSTTLDTGTRDAARVLLAST. A helical membrane pass occupies residues 192-212; it reads LTLLVGIIQLVFGGLQIGFIV. Residues 213–218 lie on the Cytoplasmic side of the membrane; that stretch reads RYLADP. The helical transmembrane segment at 219–239 threads the bilayer; sequence LVGGFTTAAAFQVLVSQLKIV. At 240–263 the chain is on the extracellular side; the sequence is LNVSTKNYNGILSIIYTLIEIFQN. A helical membrane pass occupies residues 264–284; sequence IGDTNIADFIAGLLTIIVCMA. The Cytoplasmic segment spans residues 285 to 295; that stretch reads VKELNDRFKHR. The helical transmembrane segment at 296–316 threads the bilayer; that stretch reads IPVPIPIEVIVTIIATAISYG. The Extracellular portion of the chain corresponds to 317-344; it reads ANLEKNYNAGIVKSIPSGFLPPVLPSVG. Residues 345–365 form a helical membrane-spanning segment; it reads LFSDMLAASFSIAVVAYAIAV. Topologically, residues 366 to 384 are cytoplasmic; that stretch reads SVGKVYATKHDYVIDGNQE. A helical membrane pass occupies residues 385–405; it reads FIAFGISNVFSGFFSCFVATT. Residues 406–421 lie on the Extracellular side of the membrane; that stretch reads ALSRTAVQESTGGKTQ. The helical transmembrane segment at 422-442 threads the bilayer; sequence VAGLISAVIVMVAIVALGRLL. At 443–448 the chain is on the cytoplasmic side; sequence EPLQKS. A helical transmembrane segment spans residues 449–469; sequence VLAAVVIANLKGMFMQVCDVP. Residues 470-486 lie on the Extracellular side of the membrane; that stretch reads RLWKQNKTDAVIWVFTC. The chain crosses the membrane as a helical span at residues 487–507; the sequence is IMSIILGLDLGLLAGLLFALL. Topologically, residues 508–780 are cytoplasmic; sequence TVVLRVQFPS…QDEAMRRLAS (273 aa). The 195-residue stretch at 535–729 folds into the STAS domain; that stretch reads HYKNLEEPEG…LTVHDAILHL (195 aa).

Belongs to the SLC26A/SulP transporter (TC 2.A.53) family. In terms of assembly, interacts with IQGAP1. This interaction enhances the chloride-bicarbonate exchange activity of SLC26A4. As to expression, highly expressed in the kidney (at protein level). Throughout the endolymphatic duct and sac, in distinct areas of the utricle and saccule, and in the external sulcus region within the cochlea. Expressed in the parotid gland.

The protein resides in the apical cell membrane. Its subcellular location is the cell membrane. The enzyme catalyses chloride(in) = chloride(out). It catalyses the reaction iodide(out) = iodide(in). The catalysed reaction is hydrogencarbonate(in) + chloride(out) = hydrogencarbonate(out) + chloride(in). It carries out the reaction iodide(in) + hydrogencarbonate(out) = iodide(out) + hydrogencarbonate(in). The enzyme catalyses iodide(in) + chloride(out) = iodide(out) + chloride(in). It catalyses the reaction formate(in) + chloride(out) = formate(out) + chloride(in). Functionally, sodium-independent transporter of chloride and iodide. Mediates electroneutral iodide-chloride, iodide-bicarbonate and chloride-bicarbonate exchange with 1:1 stoichiometry. Mediates elctroneutral chloride-formate exchange. The sequence is that of Pendrin (Slc26a4) from Mus musculus (Mouse).